The following is a 544-amino-acid chain: MATAPGPAGIAMGSVGSLLERQDFSPEELRAALAGSRGSRQPDGLLRKGLGQREFLSYLHLPKKDSKSTKNTKRAPRNEPADYATLYYREHSRAGDFSKTSLPERGRFDKCRIRPSVFKPTAGNGKGFLSMQSLASHKGQKLWRSNGSLHTLACHPPLSPGPRASQARAQLLHALSLDEGGPEPEPSLSDSSSGGSFGRSPGTGPSPFSSSLGHLNHLGGSLDRASQGPKEAGPPAVLSCLPEPPPPYEFSCSSAEEMGAVLPETCEELKRGLGDEDGSNPFTQVLEERQRLWLAELKRLYVERLHEVTQKAERSERNLQLQLFMAQQEQRRLRKELRAQQGLAPEPRAPGTLPEADPSARPEEEARWEVCQKTAEISLLKQQLREAQAELAQKLAEIFSLKTQLRGSRAQAQAQDAELVRLREAVRSLQEQAPREEAPGSCETDDCKSRGLLGEAGGSEARDSAEQLRAELLQERLRGQEQALRFEQERRTWQEEKERVLRYQREIQGGYMDMYRRNQALEQELRALREPPTPWSPRLESSKI.

Disordered stretches follow at residues 61–84 (LPKK…ADYA), 116–252 (SVFK…EFSC), 335–365 (KELR…PEEE), and 430–465 (QEQA…RDSA). Phosphoserine is present on serine 176. The segment covering 186–222 (PSLSDSSSGGSFGRSPGTGPSPFSSSLGHLNHLGGSL) has biased composition (low complexity). Positions 294 to 530 (LAELKRLYVE…LEQELRALRE (237 aa)) form a coiled coil.

Belongs to the N4BP3 family. Binds NEDD4. Interacts with 14-3-3 proteins. Interacts with MAVS.

The protein resides in the cytoplasmic vesicle. The protein localises to the cell projection. It localises to the axon. Its subcellular location is the dendrite. Functionally, plays a positive role in the antiviral innate immune signaling pathway. Mechanistically, interacts with MAVS and functions as a positive regulator to promote 'Lys-63'-linked polyubiquitination of MAVS and thus strengthens the interaction between MAVS and TRAF2. Also plays a role in axon and dendrite arborization during cranial nerve development. May also be important for neural crest migration and early development of other anterior structures including eye, brain and cranial cartilage. The chain is NEDD4-binding protein 3 (N4BP3) from Homo sapiens (Human).